Here is a 292-residue protein sequence, read N- to C-terminus: Protein CHLOROPLAST ENHANCING STRESS TOLERANCE, chloroplastic (292 aa).

Pro residues predominate over residues Met1 to Pro15. The transit peptide at Met1–Ala67 directs the protein to the chloroplast. 2 disordered regions span residues Met1 to Asp119 and Met206 to Asp225. Low complexity-rich tracts occupy residues Ser49–Arg58 and Ala94–Ala107. A helical membrane pass occupies residues Ala267–Phe287.

The protein belongs to the Y3IP1/CEST family.

It is found in the plastid. It localises to the chloroplast thylakoid membrane. Involved in light-induced chloroplast development and growth. Involved in the plant response to abiotic and photooxidative stresses. May be involved in the suppression of photooxidative damage. The protein is Protein CHLOROPLAST ENHANCING STRESS TOLERANCE, chloroplastic of Oryza sativa subsp. indica (Rice).